A 1204-amino-acid chain; its full sequence is Cingulin (1204 aa).

The head stretch occupies residues 7-357 (MAEPRGPVDH…GVISSGSSKA (351 aa)). The tract at residues 25-48 (EPVSGAEMGTLRRGGRRPAKDARA) is disordered. The ZIM motif lies at 48–62 (ASTYGVAVRVQGIAG). Residues 54-67 (AVRVQGIAGQPFVV) form an interaction with TJP1/ZO1 region. 2 disordered regions span residues 68–174 (LNSG…DTAP) and 186–266 (DGQL…FSRA). Residues 93 to 119 (ALSSDSELPENPYSQVQGFPAPSQSST) are compositionally biased toward polar residues. Phosphoserine is present on residues serine 95, serine 96, serine 98, serine 135, serine 137, serine 140, serine 155, serine 165, serine 214, and serine 217. The segment covering 207 to 231 (EQRKRSKSLDSRLPRDTLEERERQS) has biased composition (basic and acidic residues). Positions 232-245 (TNHWNPSTKYNNHV) are enriched in polar residues. The span at 247–261 (SLKQPAQSPSPSPLS) shows a compositional bias: low complexity. Phosphoserine occurs at positions 258, 276, 338, and 351. A coiled-coil region spans residues 358–1161 (MAGQGELARK…SLEKDSWRKA (804 aa)). Positions 379–398 (VKKRQKLEPSRAGLERQLEE) are disordered. The residue at position 579 (lysine 579) is an N6-acetyllysine. Residues 1161–1182 (ASRSAAESALKHEGLSSDEEFD) form a disordered region. The interval 1162 to 1204 (SRSAAESALKHEGLSSDEEFDSVYDPSSIASLLTESNLQTSSC) is tail. Phosphoserine occurs at positions 1176, 1177, and 1183.

The protein belongs to the cingulin family. In terms of assembly, homodimer. Interacts with TJP1/ZO1 and SPEF1.

It is found in the cell junction. The protein localises to the tight junction. In terms of biological role, probably plays a role in the formation and regulation of the tight junction (TJ) paracellular permeability barrier. The sequence is that of Cingulin from Plecturocebus moloch (Dusky titi monkey).